The primary structure comprises 683 residues: Glucosylceramidase (683 aa).

Glu254 functions as the Proton donor in the catalytic mechanism. Catalysis depends on Glu483, which acts as the Nucleophile.

Belongs to the glycosyl hydrolase 5 (cellulase A) family.

The protein localises to the membrane. It carries out the reaction a beta-D-glucosyl-(1&lt;-&gt;1')-N-acylsphing-4-enine + H2O = an N-acylsphing-4-enine + D-glucose. Its activity is regulated as follows. Inhibited by metal cations Co(2+), Cu(2+), Ni(2+), Pb(2+) and Zn(2+). Not inhibited by metal chelator ethylenediaminetetraacetic acid (EDTA). Its function is as follows. Specifically hydrolyzes the glucosidic linkage in glucosylceramide. May prevent accumulation of aberrent glucosylceramide containing immature ceramide. The sequence is that of Glucosylceramidase from Rhizopus delemar (strain RA 99-880 / ATCC MYA-4621 / FGSC 9543 / NRRL 43880) (Mucormycosis agent).